Reading from the N-terminus, the 230-residue chain is DNA ADP-ribosyl transferase (230 aa).

Residues 26–230 form the DarT domain; that stretch reads WIVWHFTHAD…KYVIKPGMYY (205 aa). NAD(+)-binding positions include 30–32, Gly39, Leu47, and Arg67; that span reads HFT. Catalysis depends on Arg67, which acts as the Proton acceptor. Residue Glu183 is part of the active site.

Belongs to the DarT ADP-ribosyltransferase family. As to quaternary structure, interacts with cognate antitoxin DarG (via C-terminus); this heterodimeric complex neutralizes the toxic effect of DarT by preventing ssDNA binding to DarT and consequently inactivating the toxin by direct protein-protein interactions.

The catalysed reaction is a thymidine in DNA + NAD(+) = an N-(ADP-alpha-D-ribosyl)-thymidine in DNA + nicotinamide + H(+). Toxic component of the hybrid type II/IV toxin-antitoxin (TA) system DarTG, which plays a crucial role in controlling bacterial growth and bacteriophage infection. ADP-ribosylates ssDNA, preferentially in the motif TTTW. In case of phage infection, DarT toxin ADP-ribosylates DNA, which inhibits both viral DNA and RNA synthesis and leads to abortive infection. Its toxic effect is neutralized by cognate antitoxin DarG. The sequence is that of DNA ADP-ribosyl transferase from Mycobacterium bovis (strain BCG / Pasteur 1173P2).